We begin with the raw amino-acid sequence, 350 residues long: Fe(2+) transport protein 2 (350 aa).

The N-terminal stretch at 1-21 (MATTKLVYILLILFTFTVSPA) is a signal peptide. At 22–47 (ISTAPEHCDSGFDNPCINKAKALPLK) the chain is on the extracellular side. The chain crosses the membrane as a helical span at residues 48–68 (IVAIVAILTTSLIGVTSPLFS). Residues 69-80 (RYISFLRPDGNG) lie on the Cytoplasmic side of the membrane. Residues 81–101 (FMIVKCFSSGIILGTGFMHVL) form a helical membrane-spanning segment. The Extracellular segment spans residues 102-120 (PDSFEMLSSKCLSDNPWHK). The helical transmembrane segment at 121-141 (FPFAGFVAMMSGLVTLAIDSI) threads the bilayer. The Cytoplasmic segment spans residues 142–195 (TTSLYTGKNSVGPVPDEEYGIDQEKAIHMVGHNHSHGHGVVLATKDDGQLLRYQ). A helical membrane pass occupies residues 196–216 (VIAMVLEVGILFHSVVIGLSL). Topologically, residues 217–227 (GATNDSCTIKG) are extracellular. A helical transmembrane segment spans residues 228 to 248 (LIIALCFHHLFEGIGLGGCIL). Topologically, residues 249–257 (QADFTNVKK) are cytoplasmic. Residues 258–278 (FLMAFFFTGTTPCGIFLGIAL) form a helical membrane-spanning segment. Residues 279–289 (SSIYRDNSPTA) lie on the Extracellular side of the membrane. The chain crosses the membrane as a helical span at residues 290 to 310 (LITIGLLNACSAGMLIYMALV). Over 311–329 (DLLATEFMGSMLQGSIKLQ) the chain is Cytoplasmic. A helical transmembrane segment spans residues 330–350 (IKCFTAALLGCAVMSVVAVWA).

This sequence belongs to the ZIP transporter (TC 2.A.5) family. As to expression, expressed in the external cell layers of the root subapical zone.

The protein localises to the cell membrane. Functionally, high-affinity iron transporter that mediates under iron-deficiency the iron uptake from the rhizosphere across the plasma membrane in the root epidermal layer. Could also be capable of transporting zinc ions. This is Fe(2+) transport protein 2 (IRT2) from Arabidopsis thaliana (Mouse-ear cress).